The following is a 396-amino-acid chain: Elongation factor Tu (396 aa).

The region spanning 10–206 (KPHCNIGTIG…AVDSYIPQPE (197 aa)) is the tr-type G domain. Residues 19–26 (GHVDHGKT) are G1. 19–26 (GHVDHGKT) contributes to the GTP binding site. Threonine 26 contributes to the Mg(2+) binding site. Positions 60–64 (GITIS) are G2. Residues 81-84 (DCPG) form a G3 region. GTP contacts are provided by residues 81 to 85 (DCPGH) and 136 to 139 (NKVD). Residues 136–139 (NKVD) are G4. The G5 stretch occupies residues 174 to 176 (SAV).

Belongs to the TRAFAC class translation factor GTPase superfamily. Classic translation factor GTPase family. EF-Tu/EF-1A subfamily. Monomer.

The protein localises to the cytoplasm. It catalyses the reaction GTP + H2O = GDP + phosphate + H(+). Functionally, GTP hydrolase that promotes the GTP-dependent binding of aminoacyl-tRNA to the A-site of ribosomes during protein biosynthesis. The sequence is that of Elongation factor Tu from Rhizorhabdus wittichii (strain DSM 6014 / CCUG 31198 / JCM 15750 / NBRC 105917 / EY 4224 / RW1) (Sphingomonas wittichii).